Consider the following 378-residue polypeptide: L-asparaginase-like protein GF11609 (378 aa).

A signal peptide spans 1 to 21 (MCSPLPLLILRLLLLTHPSLG). 3 disulfides stabilise this stretch: Cys71–Cys76, Cys170–Cys186, and Cys325–Cys352.

The protein belongs to the Ntn-hydrolase family.

This Drosophila ananassae (Fruit fly) protein is L-asparaginase-like protein GF11609.